An 89-amino-acid chain; its full sequence is UPF0237 protein CA_C0478 (89 aa).

Positions 4–78 (IITVIGKDKV…KKLGVSIKIQ (75 aa)) constitute an ACT domain.

This sequence belongs to the UPF0237 family.

This Clostridium acetobutylicum (strain ATCC 824 / DSM 792 / JCM 1419 / IAM 19013 / LMG 5710 / NBRC 13948 / NRRL B-527 / VKM B-1787 / 2291 / W) protein is UPF0237 protein CA_C0478.